We begin with the raw amino-acid sequence, 157 residues long: SsrA-binding protein (157 aa).

The interval 135–157 (KRDTIKDREGKREVERAMKTNHR) is disordered.

Belongs to the SmpB family.

It is found in the cytoplasm. Functionally, required for rescue of stalled ribosomes mediated by trans-translation. Binds to transfer-messenger RNA (tmRNA), required for stable association of tmRNA with ribosomes. tmRNA and SmpB together mimic tRNA shape, replacing the anticodon stem-loop with SmpB. tmRNA is encoded by the ssrA gene; the 2 termini fold to resemble tRNA(Ala) and it encodes a 'tag peptide', a short internal open reading frame. During trans-translation Ala-aminoacylated tmRNA acts like a tRNA, entering the A-site of stalled ribosomes, displacing the stalled mRNA. The ribosome then switches to translate the ORF on the tmRNA; the nascent peptide is terminated with the 'tag peptide' encoded by the tmRNA and targeted for degradation. The ribosome is freed to recommence translation, which seems to be the essential function of trans-translation. This Albidiferax ferrireducens (strain ATCC BAA-621 / DSM 15236 / T118) (Rhodoferax ferrireducens) protein is SsrA-binding protein.